Consider the following 89-residue polypeptide: Small ribosomal subunit protein uS14A (89 aa).

This sequence belongs to the universal ribosomal protein uS14 family. In terms of assembly, contacts proteins S3 and S10. Part of the 30S ribosomal subunit.

Binds 16S rRNA, required for the assembly of 30S particles and may also be responsible for determining the conformation of the 16S rRNA at the A site. In terms of biological role, non-essential protein. A second form of uS14, it can integrate into the 30S subunit where it partially compensates for loss of the major uS14 protein (AC P12878) in restoring 70S formation, although it does not seem to be incorporated into the ribosome as well as the major uS14. The sequence is that of Small ribosomal subunit protein uS14A from Bacillus subtilis (strain 168).